The following is a 349-amino-acid chain: Isopentenyl-diphosphate delta-isomerase (349 aa).

Position 9–10 (9–10 (RK)) interacts with substrate. Residues 65-67 (AMT), S95, and N124 each bind FMN. A substrate-binding site is contributed by 95–97 (STH). A substrate-binding site is contributed by Q154. E155 provides a ligand contact to Mg(2+). Residues K186, S211, T216, 262–264 (GLR), and 283–284 (SR) each bind FMN.

The protein belongs to the IPP isomerase type 2 family. As to quaternary structure, homooctamer. Dimer of tetramers. The cofactor is FMN. NADPH serves as cofactor. Mg(2+) is required as a cofactor.

The protein localises to the cytoplasm. It catalyses the reaction isopentenyl diphosphate = dimethylallyl diphosphate. In terms of biological role, involved in the biosynthesis of isoprenoids. Catalyzes the 1,3-allylic rearrangement of the homoallylic substrate isopentenyl (IPP) to its allylic isomer, dimethylallyl diphosphate (DMAPP). The protein is Isopentenyl-diphosphate delta-isomerase of Staphylococcus epidermidis (strain ATCC 35984 / DSM 28319 / BCRC 17069 / CCUG 31568 / BM 3577 / RP62A).